The following is a 141-amino-acid chain: HTH-type transcriptional repressor NsrR (141 aa).

An HTH rrf2-type domain is found at 2–129 (QLTSFTDYGL…DNYTLADLVE (128 aa)). The segment at residues 28–51 (ISEVTDVYGVSRNHMVKIINQLSR) is a DNA-binding region (H-T-H motif). The [2Fe-2S] cluster site is built by cysteine 91, cysteine 96, and cysteine 102.

It depends on [2Fe-2S] cluster as a cofactor.

Functionally, nitric oxide-sensitive repressor of genes involved in protecting the cell against nitrosative stress. May require iron for activity. This is HTH-type transcriptional repressor NsrR from Escherichia coli O127:H6 (strain E2348/69 / EPEC).